Here is a 218-residue protein sequence, read N- to C-terminus: Esterase FPY3 (218 aa).

Residues S95, D163, and H190 each act as charge relay system in the active site.

The protein belongs to the LovG family.

Its pathway is secondary metabolite biosynthesis. Functionally, esterase; part of the gene cluster that mediates the biosynthesis of the gamma-pyrones fusapyrone (FPY) and deoxyfusapyrone (dFPY). FPY is an undecaketide and thus likely synthesized by the polyketide synthase FPY1 from acetyl-CoA functioning as starter unit and the addition of 10 malonyl-CoA extender units by successive Claisen-condensations. Next to this, FPY shares some rare features: C-glycosylated 4-deoxyglucose at C-3, a gem-dimethyl group at C-13, and an alpha-beta to beta-gamma double bond shift at C-20. During FPY biosynthesis mono-C-methyl groups are transferred to the tetra-, penta-, hexa- and heptaketide, while two C-methyl groups are transferred to the nonaketide, suggesting that the CMet domain is programmed to selectively catalyze two successive C-alpha-methylation reactions of the nonaketide, while other alpha-carbons are non- or mono-methylated only. While the origin of the 4'-deoxyglucose moiety remains opaque, its transfer to C-3 is most likely mediated by the C-glycosyltransferase FPY2. Next to this, the hydroxyl group present at C-33 and discriminating between FPY and dFPY, is likely to be installed by the cytochrome P450 monooxygenase FPY7. No putative function can be predicted for the remaining genes FPY3-FPY6. The polypeptide is Esterase FPY3 (Fusarium mangiferae (Mango malformation disease fungus)).